Reading from the N-terminus, the 486-residue chain is MANMKPNLTDLFRLRERADEGAARRENDRLLGLGSTVPQLLRPVWSGAPTVTGNIIGAIVNRGSAGTELLRTGPATNSGGGRMAAQQHAFGADDAAGVKAALLGSIAPTADALRAQQVLTTQVTVTDMCKPDVEGPGSLMLFFRGVRRLLIKLSAETMVRNDLINELETAFMILNRICGLPPVGTNGINNFEASLVSLNVLAAAAAPHYRNTCEVDALRTFVLAGGKDSKLNEKLTNLDLILQASVESRNFPHSILFPAGALTESVNSTNVACVKMLMNGSVELEGGLTRPCGSFRFPACLFLDLDDTRQCGVVPRGADRADGLFYVYLLFLYSTETWHPSYEIYVAKSALGEAGLQSMLDEKFARRRVNNTVAAAPPAGNFYARGRQREDGDWRCYIEDAYRRASGNNAVNPLEQGARPTDLHISFAGVPDRNSATYAAFCQLGVSLGPWSSACRYTTVQRHGLGLKYVELPGLSLKIGTWRACY.

This sequence belongs to the herpesviridae TRX1 protein family. As to quaternary structure, interacts with TRX2, MCP and capsid vertex component 2/CVC2.

It is found in the virion. It localises to the host nucleus. Structural component of the T=16 icosahedral capsid. The capsid is composed of pentamers and hexamers of major capsid protein/MCP, which are linked together by heterotrimers called triplexes. These triplexes are formed by a single molecule of triplex protein 1/TRX1 and two copies of triplex protein 2/TRX2. Additionally, TRX1 is required for efficient transport of TRX2 to the nucleus, which is the site of capsid assembly. This is Triplex capsid protein 1 from Psittacid herpesvirus 1 (isolate Amazon parrot/-/97-0001/1997) (PsHV-1).